Reading from the N-terminus, the 273-residue chain is NADPH-dependent 7-cyano-7-deazaguanine reductase (273 aa).

80–82 (VES) contacts substrate. Position 82–83 (82–83 (SK)) interacts with NADPH. Catalysis depends on cysteine 180, which acts as the Thioimide intermediate. The Proton donor role is filled by aspartate 187. Position 219–220 (219–220 (HE)) interacts with substrate. Residue 248-249 (RG) participates in NADPH binding.

The protein belongs to the GTP cyclohydrolase I family. QueF type 2 subfamily. In terms of assembly, homodimer.

Its subcellular location is the cytoplasm. The enzyme catalyses 7-aminomethyl-7-carbaguanine + 2 NADP(+) = 7-cyano-7-deazaguanine + 2 NADPH + 3 H(+). It participates in tRNA modification; tRNA-queuosine biosynthesis. Its function is as follows. Catalyzes the NADPH-dependent reduction of 7-cyano-7-deazaguanine (preQ0) to 7-aminomethyl-7-deazaguanine (preQ1). This chain is NADPH-dependent 7-cyano-7-deazaguanine reductase, found in Bordetella pertussis (strain Tohama I / ATCC BAA-589 / NCTC 13251).